We begin with the raw amino-acid sequence, 430 residues long: Glutamate-1-semialdehyde 2,1-aminomutase (430 aa).

Lysine 267 is modified (N6-(pyridoxal phosphate)lysine).

The protein belongs to the class-III pyridoxal-phosphate-dependent aminotransferase family. HemL subfamily. In terms of assembly, homodimer. Pyridoxal 5'-phosphate serves as cofactor.

It localises to the cytoplasm. The catalysed reaction is (S)-4-amino-5-oxopentanoate = 5-aminolevulinate. It participates in porphyrin-containing compound metabolism; protoporphyrin-IX biosynthesis; 5-aminolevulinate from L-glutamyl-tRNA(Glu): step 2/2. The polypeptide is Glutamate-1-semialdehyde 2,1-aminomutase (Anaeromyxobacter dehalogenans (strain 2CP-1 / ATCC BAA-258)).